Here is a 139-residue protein sequence, read N- to C-terminus: Aspartate 1-decarboxylase (139 aa).

Serine 25 functions as the Schiff-base intermediate with substrate; via pyruvic acid in the catalytic mechanism. Serine 25 carries the pyruvic acid (Ser) modification. Threonine 57 serves as a coordination point for substrate. Tyrosine 58 functions as the Proton donor in the catalytic mechanism. 73-75 (GAA) is a binding site for substrate.

This sequence belongs to the PanD family. In terms of assembly, heterooctamer of four alpha and four beta subunits. Pyruvate is required as a cofactor. Post-translationally, is synthesized initially as an inactive proenzyme, which is activated by self-cleavage at a specific serine bond to produce a beta-subunit with a hydroxyl group at its C-terminus and an alpha-subunit with a pyruvoyl group at its N-terminus.

It is found in the cytoplasm. The enzyme catalyses L-aspartate + H(+) = beta-alanine + CO2. It participates in cofactor biosynthesis; (R)-pantothenate biosynthesis; beta-alanine from L-aspartate: step 1/1. In terms of biological role, catalyzes the pyruvoyl-dependent decarboxylation of aspartate to produce beta-alanine. This Mycobacterium bovis (strain BCG / Tokyo 172 / ATCC 35737 / TMC 1019) protein is Aspartate 1-decarboxylase.